Reading from the N-terminus, the 163-residue chain is Transcription antitermination protein NusB (163 aa).

Residues 1-21 (MTTFLSDSEHPQDVKAPPKSA) form a disordered region.

This sequence belongs to the NusB family.

Its function is as follows. Involved in transcription antitermination. Required for transcription of ribosomal RNA (rRNA) genes. Binds specifically to the boxA antiterminator sequence of the ribosomal RNA (rrn) operons. This is Transcription antitermination protein NusB from Dechloromonas aromatica (strain RCB).